The following is a 151-amino-acid chain: SsrA-binding protein (151 aa).

This sequence belongs to the SmpB family.

Its subcellular location is the cytoplasm. Functionally, required for rescue of stalled ribosomes mediated by trans-translation. Binds to transfer-messenger RNA (tmRNA), required for stable association of tmRNA with ribosomes. tmRNA and SmpB together mimic tRNA shape, replacing the anticodon stem-loop with SmpB. tmRNA is encoded by the ssrA gene; the 2 termini fold to resemble tRNA(Ala) and it encodes a 'tag peptide', a short internal open reading frame. During trans-translation Ala-aminoacylated tmRNA acts like a tRNA, entering the A-site of stalled ribosomes, displacing the stalled mRNA. The ribosome then switches to translate the ORF on the tmRNA; the nascent peptide is terminated with the 'tag peptide' encoded by the tmRNA and targeted for degradation. The ribosome is freed to recommence translation, which seems to be the essential function of trans-translation. This is SsrA-binding protein from Chlamydia muridarum (strain MoPn / Nigg).